Reading from the N-terminus, the 254-residue chain is MENIMNNPVIGVVMCRNRLKGHATQTLQEKYLNAIIHAGGLPIALPHALAEPSLLEQLLPKLDGIYLPSSPSNVQPHLYGENGDEPDADPGRDLLSMAIINAALERRIPIFAICRGLQELVVATGGSLHRKLCEQPELLEHREDPELPVEQQYAPSHEVQVEEGGLLSALLPECSNFWVNSLHGQGAKVVSPRLRVEARSPDGLVEAVSVINHPFALGVQWHPEWNSSEYALSRILFEGFITAWQHHIAEKQRL.

The region spanning 16–250 is the Glutamine amidotransferase type-1 domain; the sequence is RNRLKGHATQ…ITAWQHHIAE (235 aa). The active-site Nucleophile is cysteine 114. Catalysis depends on residues histidine 222 and glutamate 224.

This sequence belongs to the peptidase C26 family.

The catalysed reaction is 4-(gamma-L-glutamylamino)butanoate + H2O = 4-aminobutanoate + L-glutamate. Its pathway is amine and polyamine degradation; putrescine degradation; 4-aminobutanoate from putrescine: step 4/4. In terms of biological role, involved in the breakdown of putrescine via hydrolysis of the gamma-glutamyl linkage of gamma-glutamyl-gamma-aminobutyrate. The sequence is that of Gamma-glutamyl-gamma-aminobutyrate hydrolase (puuD) from Shigella flexneri.